Here is a 238-residue protein sequence, read N- to C-terminus: MTTSAVKVLIHGASGRMGKALLRLAAEDQTLQVVGAVVGRSPSQRVVDGVPFFAASELGGAPAFDVAIDFSLPQGFAPILALCAQRGKPLVSGTTGLDEAQRAALRDAAQQIALVWASNFSLGVAVLTELVERAAGTLPGWDCDILESHHVHKQDAPSGTALTLGEAATGSGAQPRYVSLRAGDIVGEHTVQFTGLGERVELVHRATNRDIFARGALHAAKRLIGKPAGSYRVRDLVL.

12–17 contacts NAD(+); it reads GASGRM. Residue Arg-40 coordinates NADP(+). NAD(+) contacts are provided by residues 93–95 and 117–120; these read GTT and ASNF. His-149 functions as the Proton donor/acceptor in the catalytic mechanism. A (S)-2,3,4,5-tetrahydrodipicolinate-binding site is contributed by His-150. Residue Lys-153 is the Proton donor of the active site. (S)-2,3,4,5-tetrahydrodipicolinate is bound at residue 159-160; sequence GT.

Belongs to the DapB family.

It localises to the cytoplasm. The enzyme catalyses (S)-2,3,4,5-tetrahydrodipicolinate + NAD(+) + H2O = (2S,4S)-4-hydroxy-2,3,4,5-tetrahydrodipicolinate + NADH + H(+). It catalyses the reaction (S)-2,3,4,5-tetrahydrodipicolinate + NADP(+) + H2O = (2S,4S)-4-hydroxy-2,3,4,5-tetrahydrodipicolinate + NADPH + H(+). It functions in the pathway amino-acid biosynthesis; L-lysine biosynthesis via DAP pathway; (S)-tetrahydrodipicolinate from L-aspartate: step 4/4. Catalyzes the conversion of 4-hydroxy-tetrahydrodipicolinate (HTPA) to tetrahydrodipicolinate. This Xanthomonas axonopodis pv. citri (strain 306) protein is 4-hydroxy-tetrahydrodipicolinate reductase.